The sequence spans 471 residues: Glutamate--tRNA ligase 2 (471 aa).

Positions P15–G25 match the 'HIGH' region motif. The short motif at K243 to R247 is the 'KMSKS' region element. K246 is an ATP binding site.

This sequence belongs to the class-I aminoacyl-tRNA synthetase family. Glutamate--tRNA ligase type 1 subfamily. Monomer.

It is found in the cytoplasm. The catalysed reaction is tRNA(Glu) + L-glutamate + ATP = L-glutamyl-tRNA(Glu) + AMP + diphosphate. Catalyzes the attachment of glutamate to tRNA(Glu) in a two-step reaction: glutamate is first activated by ATP to form Glu-AMP and then transferred to the acceptor end of tRNA(Glu). This Cereibacter sphaeroides (strain ATCC 17025 / ATH 2.4.3) (Rhodobacter sphaeroides) protein is Glutamate--tRNA ligase 2.